Here is a 442-residue protein sequence, read N- to C-terminus: Putative pyrimidine permease RutG (442 aa).

Topologically, residues 1–57 (MAMFGFPHWQLKSTSTESGVVAPDERLPFAQTAVMGVQHAVAMFGATVLMPILMGLD) are cytoplasmic. A helical membrane pass occupies residues 58–78 (PNLSILMSGIGTLLFFFITGG). Residue R79 is a topological domain, periplasmic. A helical transmembrane segment spans residues 80–100 (VPSYLGSSAAFVGVVIAATGF). Over 101-110 (NGQGINPNIS) the chain is Cytoplasmic. Residues 111–131 (IALGGIIACGLVYTVIGLVVM) traverse the membrane as a helical segment. The Periplasmic portion of the chain corresponds to 132–140 (KIGTRWIER). The helical transmembrane segment at 141–161 (LMPPVVTGAVVMAIGLNLAPI) threads the bilayer. Residues 162-169 (AVKSVSAS) are Cytoplasmic-facing. The helical transmembrane segment at 170–190 (AFDSWMAVMTVLCIGLVAVFT) threads the bilayer. Residues 191–196 (RGMIQR) lie on the Periplasmic side of the membrane. The helical transmembrane segment at 197–217 (LLILVGLIVACLLYGVMTNVL) threads the bilayer. Residues 218-240 (GLGKAVDFTLVSHAAWFGLPHFS) lie on the Cytoplasmic side of the membrane. Residues 241–261 (TPAFNGQAMMLIAPVAVILVA) traverse the membrane as a helical segment. Residues 262–284 (ENLGHLKAVAGMTGRNMDPYMGR) are Periplasmic-facing. A helical membrane pass occupies residues 285–305 (AFVGDGLATMLSGSVGGSGVT). The Cytoplasmic portion of the chain corresponds to 306 to 318 (TYAENIGVMAVTK). A helical transmembrane segment spans residues 319–339 (VYSTLVFVAAAVIAMLLGFSP). Residues 340-347 (KFGALIHT) are Periplasmic-facing. Residues 348–368 (IPAAVIGGASIVVFGLIAVAG) traverse the membrane as a helical segment. Over 369–385 (ARIWVQNRVDLSQNGNL) the chain is Cytoplasmic. 2 consecutive transmembrane segments (helical) span residues 386 to 406 (IMVA…LGGF) and 407 to 427 (TLGG…LLSR). The Cytoplasmic portion of the chain corresponds to 428 to 442 (KLVDVPPPEVVHQEP).

It belongs to the nucleobase:cation symporter-2 (NCS2) (TC 2.A.40) family.

The protein resides in the cell inner membrane. Its function is as follows. May function as a proton-driven pyrimidine uptake system. The protein is Putative pyrimidine permease RutG (rutG) of Escherichia coli (strain K12).